We begin with the raw amino-acid sequence, 602 residues long: Sodium- and chloride-dependent GABA transporter 2 (602 aa).

Over 1 to 40 (MDNRVSGTTSNGETKPVCPVMEKVEEDGTLEREQWTNKME) the chain is Cytoplasmic. 3 consecutive transmembrane segments (helical) span residues 41-61 (FVLS…FPYL), 68-88 (GAFF…VFFL), and 121-141 (IVSL…FYLF). Over 142-206 (SSFTTDLPWG…GIQHLGSLRW (65 aa)) the chain is Extracellular. A disulfide bridge connects residues Cys-153 and Cys-162. 3 N-linked (GlcNAc...) asparagine glycosylation sites follow: Asn-169, Asn-173, and Asn-178. The next 2 membrane-spanning stretches (helical) occupy residues 207-227 (ELVL…WKGV) and 233-253 (VVYF…IRGV). The N-linked (GlcNAc...) asparagine glycan is linked to Asn-269. The next 7 membrane-spanning stretches (helical) occupy residues 282–302 (AGTQ…ALGS), 319–339 (ILNS…LGFM), 366–386 (VVML…VVLL), 418–438 (ILIL…LTEG), 453–473 (GMCL…VYGA), 490–510 (PLIK…TFLF), and 528–548 (WWGD…IPAW). At 549–602 (SIYKLRTLKGPLRERLRQLVCPAEDLPQKSQPELTSPATPMTSLLRLTELESNC) the chain is on the cytoplasmic side. At Thr-587 the chain carries Phosphothreonine. Ser-591 bears the Phosphoserine mark.

The protein belongs to the sodium:neurotransmitter symporter (SNF) (TC 2.A.22) family. SLC6A13 subfamily. As to expression, brain, retina, and peripheral tissues. Expressed in hepatocytes (at protein level).

Its subcellular location is the cell membrane. The protein localises to the basolateral cell membrane. The catalysed reaction is 4-aminobutanoate(out) + chloride(out) + 2 Na(+)(out) = 4-aminobutanoate(in) + chloride(in) + 2 Na(+)(in). It catalyses the reaction taurine(out) + chloride(out) + 2 Na(+)(out) = taurine(in) + chloride(in) + 2 Na(+)(in). The enzyme catalyses beta-alanine(out) + chloride(out) + 2 Na(+)(out) = beta-alanine(in) + chloride(in) + 2 Na(+)(in). It carries out the reaction hypotaurine(out) + chloride(out) + 2 Na(+)(out) = hypotaurine(in) + chloride(in) + 2 Na(+)(in). GABA transport is inhibited by beta-alanine, L-2,4-Diaminobutyric acid, hypotaurine and nipecotic acid. Taurine transport is inhibited by hypotaurine, beta-alanine and nipecotic acid. Its function is as follows. Mediates sodium- and chloride-dependent transport of gamma-aminobutyric acid (GABA). Mediates transport of taurine and is the major taurine transporter in hepatocytes. Can also mediate transport of beta-alanine and hypotaurine. The polypeptide is Sodium- and chloride-dependent GABA transporter 2 (Slc6a13) (Rattus norvegicus (Rat)).